A 228-amino-acid chain; its full sequence is Phosphoglycolate phosphatase (228 aa).

Asp9 functions as the Nucleophile in the catalytic mechanism. Residues Asp9 and Asp11 each coordinate Mg(2+). Lys151 is a binding site for substrate. Asp174 and Asp178 together coordinate Mg(2+).

Belongs to the archaeal SPP-like hydrolase family. Mg(2+) serves as cofactor.

The enzyme catalyses 2-phosphoglycolate + H2O = glycolate + phosphate. Functionally, catalyzes the dephosphorylation of 2-phosphoglycolate. The protein is Phosphoglycolate phosphatase of Pyrobaculum aerophilum (strain ATCC 51768 / DSM 7523 / JCM 9630 / CIP 104966 / NBRC 100827 / IM2).